The sequence spans 76 residues: DNA-binding protein S1FA2 (76 aa).

A Nuclear localization signal motif is present at residues 50-55 (PPRKKK). Over residues 51–66 (PRKKKPLSKKKLKREK) the composition is skewed to basic residues. Residues 51–76 (PRKKKPLSKKKLKREKLKQGVPVPGE) form a disordered region.

This sequence belongs to the S1FA transcription factor family.

It localises to the nucleus. Its function is as follows. DNA-binding protein that specifically recognizes a negative element (S1F) within the RPS1 promoter. This chain is DNA-binding protein S1FA2 (S1FA2), found in Arabidopsis thaliana (Mouse-ear cress).